We begin with the raw amino-acid sequence, 269 residues long: Regulatory protein RecX (269 aa).

This sequence belongs to the RecX family.

The protein resides in the cytoplasm. In terms of biological role, modulates RecA activity. The polypeptide is Regulatory protein RecX (Lactococcus lactis subsp. cremoris (strain MG1363)).